A 116-amino-acid chain; its full sequence is Nucleoid-associated protein MLBr02330 (116 aa).

The segment at 96–116 (LTSAMRPTAPPPTPPTYMAGT) is disordered.

It belongs to the YbaB/EbfC family. Homodimer.

It localises to the cytoplasm. The protein localises to the nucleoid. Binds to DNA and alters its conformation. May be involved in regulation of gene expression, nucleoid organization and DNA protection. The chain is Nucleoid-associated protein MLBr02330 from Mycobacterium leprae (strain Br4923).